The chain runs to 1364 residues: Serine protease EatA (1364 aa).

The N-terminal stretch at 1–56 (MNKVFSLKYSFLAKGFIAVSELARRVSVKGKLKSASSIIISPITIAIVSYAPPSLA) is a signal peptide. The Peptidase S6 domain maps to 57–307 (ATVNADISYQ…VVTTQDFLHQ (251 aa)). Catalysis depends on charge relay system residues histidine 134, aspartate 162, and serine 267. The Autotransporter domain maps to 1098–1364 (DSQGDAGGWA…SINANFRYYF (267 aa)).

Post-translationally, cleaved to release the mature protein from the outer membrane.

The protein localises to the periplasm. It is found in the secreted. The protein resides in the cell surface. Its subcellular location is the cell outer membrane. Its activity is regulated as follows. Inhibited by phenylmethylsulfonyl fluoride. Autotransporter serine protease probably involved in virulence. The sequence is that of Serine protease EatA (eatA) from Escherichia coli O78:H11 (strain H10407 / ETEC).